The sequence spans 340 residues: GTP 3',8-cyclase (340 aa).

Residues 20 to 246 (RFERQYVYLR…PKALSDGPAK (227 aa)) form the Radical SAM core domain. A GTP-binding site is contributed by arginine 29. Residues cysteine 36 and cysteine 40 each coordinate [4Fe-4S] cluster. Tyrosine 42 contributes to the S-adenosyl-L-methionine binding site. Cysteine 43 lines the [4Fe-4S] cluster pocket. Arginine 79 contacts GTP. An S-adenosyl-L-methionine-binding site is contributed by glycine 83. Threonine 110 serves as a coordination point for GTP. Serine 134 is an S-adenosyl-L-methionine binding site. Lysine 171 serves as a coordination point for GTP. Residue methionine 205 coordinates S-adenosyl-L-methionine. [4Fe-4S] cluster is bound by residues cysteine 268 and cysteine 271. 273-275 (RLR) lines the GTP pocket. Residue cysteine 285 participates in [4Fe-4S] cluster binding.

Belongs to the radical SAM superfamily. MoaA family. Monomer and homodimer. The cofactor is [4Fe-4S] cluster.

The enzyme catalyses GTP + AH2 + S-adenosyl-L-methionine = (8S)-3',8-cyclo-7,8-dihydroguanosine 5'-triphosphate + 5'-deoxyadenosine + L-methionine + A + H(+). Its pathway is cofactor biosynthesis; molybdopterin biosynthesis. Functionally, catalyzes the cyclization of GTP to (8S)-3',8-cyclo-7,8-dihydroguanosine 5'-triphosphate. This chain is GTP 3',8-cyclase, found in Actinobacillus pleuropneumoniae serotype 7 (strain AP76).